The primary structure comprises 217 residues: Uracil-DNA glycosylase (217 aa).

Catalysis depends on Asp-62, which acts as the Proton acceptor.

It belongs to the uracil-DNA glycosylase (UDG) superfamily. UNG family.

It localises to the cytoplasm. It carries out the reaction Hydrolyzes single-stranded DNA or mismatched double-stranded DNA and polynucleotides, releasing free uracil.. Its function is as follows. Excises uracil residues from the DNA which can arise as a result of misincorporation of dUMP residues by DNA polymerase or due to deamination of cytosine. The protein is Uracil-DNA glycosylase of Streptococcus pyogenes serotype M1.